The following is a 408-amino-acid chain: Glutamate N-acetyltransferase (408 aa).

Residues Thr150, Lys176, Thr189, Glu271, Asn403, and Thr408 each contribute to the substrate site. Thr189 (nucleophile) is an active-site residue.

This sequence belongs to the ArgJ family. In terms of assembly, heterotetramer of two alpha and two beta chains.

The protein localises to the cytoplasm. It catalyses the reaction N(2)-acetyl-L-ornithine + L-glutamate = N-acetyl-L-glutamate + L-ornithine. It functions in the pathway amino-acid biosynthesis; L-arginine biosynthesis; L-ornithine and N-acetyl-L-glutamate from L-glutamate and N(2)-acetyl-L-ornithine (cyclic): step 1/1. Functionally, catalyzes the transfer of the acetyl group from N(2)-acetylornithine to glutamate, forming N-acetylglutamate and L-ornithine. The polypeptide is Glutamate N-acetyltransferase (Methanococcus maripaludis (strain DSM 14266 / JCM 13030 / NBRC 101832 / S2 / LL)).